Reading from the N-terminus, the 121-residue chain is Basic phospholipase A2 BmjeTX-II (121 aa).

Cystine bridges form between cysteine 26–cysteine 114, cysteine 28–cysteine 45, cysteine 44–cysteine 95, cysteine 50–cysteine 121, cysteine 51–cysteine 88, cysteine 58–cysteine 82, and cysteine 76–cysteine 86. 3 residues coordinate Ca(2+): tyrosine 27, glycine 29, and glycine 31. Histidine 48 is a catalytic residue. Aspartate 49 contributes to the Ca(2+) binding site. Aspartate 89 is an active-site residue.

It depends on Ca(2+) as a cofactor. In terms of tissue distribution, expressed by the venom gland.

The protein resides in the secreted. The catalysed reaction is a 1,2-diacyl-sn-glycero-3-phosphocholine + H2O = a 1-acyl-sn-glycero-3-phosphocholine + a fatty acid + H(+). Snake venom phospholipase A2 (PLA2) that induces blockade of neuromuscular contraction in an indirectly stimulated chick biventer cervicis nerve-muscle preparation. Does not inhibit contraction of chick biventer cervicic nerve-muscle preparation in response to treatment with acetylcholine or KCl. The neuromuscular blockade is mediated by inhibitory action at the presynaptic motor nerve endings. Lyses skeletal myoblasts and myotubes in vitro, and intramuscular injection causes local muscle necrosis. Induces edema in the mouse foot pad. Induces a transient increase of IL-6 levels. PLA2 catalyzes the calcium-dependent hydrolysis of the 2-acyl groups in 3-sn-phosphoglycerides. In Bothrops marajoensis (Marajo lancehead), this protein is Basic phospholipase A2 BmjeTX-II.